We begin with the raw amino-acid sequence, 140 residues long: FAD synthase (140 aa).

ATP is bound by residues 10–11 (TF), 15–18 (HPGH), and N93.

It belongs to the archaeal FAD synthase family. Homodimer. Requires a divalent metal cation as cofactor.

The enzyme catalyses FMN + ATP + H(+) = FAD + diphosphate. The protein operates within cofactor biosynthesis; FAD biosynthesis; FAD from FMN: step 1/1. Its function is as follows. Catalyzes the transfer of the AMP portion of ATP to flavin mononucleotide (FMN) to produce flavin adenine dinucleotide (FAD) coenzyme. In Methanocella arvoryzae (strain DSM 22066 / NBRC 105507 / MRE50), this protein is FAD synthase.